The sequence spans 92 residues: 10 kDa late embryogenesis abundant protein (92 aa).

Polar residues predominate over residues 1-10 (MASQQGQQTR). The tract at residues 1–92 (MASQQGQQTR…GEREEEEEED (92 aa)) is disordered. Composition is skewed to basic and acidic residues over residues 11–26 (KIPE…RAAK) and 38–71 (KSLE…EMGK).

This sequence belongs to the small hydrophilic plant seed protein family. As to expression, maximally expressed in dry seeds. Also present in mid-maturation embryos.

LEA proteins are late embryonic proteins abundant in higher plant seed embryos. They may play an essential role in seed survival and in controlling water exchanges during seed desiccation and imbibition. The protein is 10 kDa late embryogenesis abundant protein of Helianthus annuus (Common sunflower).